The primary structure comprises 486 residues: Pentatricopeptide repeat-containing protein At2g01860 (486 aa).

The disordered stretch occupies residues 111 to 137 (QKPDKPSRVRPLPLPQPHKLRPLGLPT). PPR repeat units follow at residues 290–321 (DSSVYVKMILEIAKNPDKYHLVVALLEELKKR), 327–361 (SQQDCTSIMKICVKLGEFELVESLFDWFKASNREP), 362–396 (SVVMYTTMIHSRYSEQKYREAMSVVWEMEESNCLL), 397–431 (DLPAYRVVIKLFVALDDLGRAMRYYSKLKEAGFSP), and 432–466 (TYDIYRDMISVYTASGRLTKCKEICKEVEDAGLRL).

It belongs to the PPR family. P subfamily.

This Arabidopsis thaliana (Mouse-ear cress) protein is Pentatricopeptide repeat-containing protein At2g01860 (EMB975).